The primary structure comprises 241 residues: MDVARAKRVLLKLSGEALMGEQAYGIAPEFLSYLVEEVQSAIALDIELALVIGGGNIFRGISGSANGMGRTRADQMGMLATVINGLALQSALMLSGTEAVVQTALEMPRVAEPFDHDSAKSHMKQGRVVIFVAGTGNPFFTTDTAAALRACEIEADLLLKATKVDGVYDSDPVKNPKAKRFETLTYHEVLTKNLKVMDMTAITLCRENHIPIGVFSIFERGALTAVLRGEPKATIIEERKE.

12 to 15 is a binding site for ATP; that stretch reads KLSG. Residue Gly54 participates in UMP binding. ATP-binding residues include Gly55 and Arg59. UMP-binding positions include Asp74 and 135–142; that span reads TGNPFFTT. Residues Thr162, Tyr168, and Asp171 each contribute to the ATP site.

Belongs to the UMP kinase family. Homohexamer.

It is found in the cytoplasm. It catalyses the reaction UMP + ATP = UDP + ADP. Its pathway is pyrimidine metabolism; CTP biosynthesis via de novo pathway; UDP from UMP (UMPK route): step 1/1. Inhibited by UTP. In terms of biological role, catalyzes the reversible phosphorylation of UMP to UDP. This Magnetococcus marinus (strain ATCC BAA-1437 / JCM 17883 / MC-1) protein is Uridylate kinase.